A 66-amino-acid chain; its full sequence is DNA gyrase inhibitor YacG (66 aa).

Zn(2+) is bound by residues Cys9, Cys12, Cys28, and Cys32. The tract at residues 45–66 (HKIAGAEESEDELYSGDLEPRH) is disordered.

This sequence belongs to the DNA gyrase inhibitor YacG family. As to quaternary structure, interacts with GyrB. Zn(2+) is required as a cofactor.

Its function is as follows. Inhibits all the catalytic activities of DNA gyrase by preventing its interaction with DNA. Acts by binding directly to the C-terminal domain of GyrB, which probably disrupts DNA binding by the gyrase. The polypeptide is DNA gyrase inhibitor YacG (Pseudomonas entomophila (strain L48)).